We begin with the raw amino-acid sequence, 408 residues long: Prenyltransferase criF (408 aa).

Arg-94, Lys-181, Tyr-183, Arg-248, Lys-250, Tyr-252, Gln-334, Tyr-336, Tyr-400, and Tyr-404 together coordinate dimethylallyl diphosphate.

The protein belongs to the tryptophan dimethylallyltransferase family. As to quaternary structure, homodimer.

It carries out the reaction preechinulin + dimethylallyl diphosphate = tardioxopiperazine B + diphosphate. The catalysed reaction is preechinulin + dimethylallyl diphosphate = tardioxopiperazine A + diphosphate. The enzyme catalyses tardioxopiperazine A + dimethylallyl diphosphate = echinulin + diphosphate. It catalyses the reaction tardioxopiperazine A + dimethylallyl diphosphate = variecolorin L + diphosphate. It carries out the reaction neoechinulin A + dimethylallyl diphosphate = variecolorin G + diphosphate. The catalysed reaction is neoechinulin A + dimethylallyl diphosphate = isoechinulin A + diphosphate. The enzyme catalyses isoechinulin A + dimethylallyl diphosphate = dehydroechinulin + diphosphate. It catalyses the reaction neoechinulin B + dimethylallyl diphosphate = isoechinulin B + diphosphate. It participates in secondary metabolite biosynthesis. It functions in the pathway alkaloid biosynthesis. In terms of biological role, prenyltransferase; part of the gene cluster that mediates the biosynthesis of echinulin family alkaloid. The pathway begins with the biosynthesis of the cyclic dipeptide cyclo-L-Trp-L-Ala (cyclo-TA) by the NRPS criC via condensation of L-alanine and L-tryptophan. The prenyltransferase criA then catalyzes the first prenylation step, a reverse prenylation reaction at C2, to yield preechinulin. Preechinulin is the substrate of the cytochrome P450 monooxygenase criE that catalyzes the formation of the double bond between C10 and C11 to produce neoechulin A. The unique prenyltransferase criF functions as a competitive enzyme with criE for preechinulin metabolization and uses preechinulin for effective regiospecific prenylations. Preechinulin is prenylated by criF at C5 or C7. C7-prenylation leads to accumulation of tardioxopiperazine B without further modification by criF. In contrast, the C5-prenylated tardioxopiperazine A can be prenylated again by criF, predominantly at C7 to form echinulin or less frequently at C4 to give variecolorin L. CriF also accepts neoechilunin A to produce varlecolorin G (prenylation at C5) or isoechinulin A (prenylation at C7). CriF further converts isoechinulin A into dehydroechinulin. Moreover, a yet unidentified enzyme can also convert neoechilunin A into neoechilunin B by introducing a double bond between positions C14 and C17 and thus provides a further substrate to criF for C5 and C7 prenylation. This Aspergillus cristatus (Chinese Fuzhuan brick tea-fermentation fungus) protein is Prenyltransferase criF.